A 281-amino-acid polypeptide reads, in one-letter code: Shikimate dehydrogenase (NADP(+)) (281 aa).

Residues 19–21 (SFS) and threonine 66 each bind shikimate. The Proton acceptor role is filled by lysine 70. Residues asparagine 91 and aspartate 104 each coordinate shikimate. Residues 127–131 (GAGGA) and isoleucine 223 each bind NADP(+). A shikimate-binding site is contributed by tyrosine 225. Residue glycine 246 coordinates NADP(+).

The protein belongs to the shikimate dehydrogenase family. As to quaternary structure, homodimer.

It carries out the reaction shikimate + NADP(+) = 3-dehydroshikimate + NADPH + H(+). Its pathway is metabolic intermediate biosynthesis; chorismate biosynthesis; chorismate from D-erythrose 4-phosphate and phosphoenolpyruvate: step 4/7. Functionally, involved in the biosynthesis of the chorismate, which leads to the biosynthesis of aromatic amino acids. Catalyzes the reversible NADPH linked reduction of 3-dehydroshikimate (DHSA) to yield shikimate (SA). The protein is Shikimate dehydrogenase (NADP(+)) of Methanobrevibacter smithii (strain ATCC 35061 / DSM 861 / OCM 144 / PS).